The chain runs to 481 residues: Replication factor C large subunit (481 aa).

Residue 43-50 participates in ATP binding; the sequence is GKPGIGKT. Basic and acidic residues-rich tracts occupy residues 408–433 and 441–457; these read KVER…KDAD and VPKE…ERPA. The segment at 408–481 is disordered; that stretch reads KVEREKEPEP…HNQSTLFDGF (74 aa). Residues 471-481 show a composition bias toward polar residues; it reads AHNQSTLFDGF.

Belongs to the activator 1 small subunits family. RfcL subfamily. Heteromultimer composed of small subunits (RfcS) and large subunits (RfcL).

Functionally, part of the RFC clamp loader complex which loads the PCNA sliding clamp onto DNA. This is Replication factor C large subunit from Methanoregula boonei (strain DSM 21154 / JCM 14090 / 6A8).